We begin with the raw amino-acid sequence, 954 residues long: cGMP-specific 3',5'-cyclic phosphodiesterase alpha (954 aa).

At 1-259 (MMDTKVDQTI…NTFYSSFPFK (259 aa)) the chain is on the cytoplasmic side. A helical transmembrane segment spans residues 260-280 (LFLHSLYMIFICFIYFVVLYF). Residues 281 to 296 (MLLKKIYTHPFIFHLS) are Extracellular-facing. A helical transmembrane segment spans residues 297–317 (VLKFLFDIIFFLSFILYPLFL). The Cytoplasmic segment spans residues 318-327 (RLKRIDKIIY). Residues 328–348 (SSYISSYIFVCVTFLYSFIIF) form a helical membrane-spanning segment. Residues 349 to 365 (KCSSYSVKMNSNTYQNN) are Extracellular-facing. Residues 366-386 (FVFQNMLFLLINIIYICIFCF) traverse the membrane as a helical segment. Over 387-401 (LKNYMILYSFLYNCR) the chain is Cytoplasmic. Residues 402–422 (FSIFCILFIFLYYYLFFSLDF) traverse the membrane as a helical segment. At 423–432 (YRIIHLPLDN) the chain is on the extracellular side. Residues 433–453 (FFFPFLCFLFFSFLFIFKIIM) form a helical membrane-spanning segment. Over 454 to 954 (SLYYEYVYEK…LSKLELIKFE (501 aa)) the chain is Cytoplasmic. The PDEase domain maps to 586–930 (NQEETKSFLS…ERWESHKNDN (345 aa)). The Proton donor role is filled by H680. 680 to 684 (HTSLH) serves as a coordination point for 3',5'-cyclic GMP. Zn(2+)-binding residues include H684, H720, D721, and D832. 3',5'-cyclic GMP-binding residues include D721, D832, and Q884. Mg(2+) is bound at residue D721.

This sequence belongs to the cyclic nucleotide phosphodiesterase family. It depends on Zn(2+) as a cofactor. The cofactor is Mg(2+).

The protein localises to the membrane. It carries out the reaction 3',5'-cyclic GMP + H2O = GMP + H(+). The protein operates within purine metabolism; 3',5'-cyclic GMP degradation; GMP from 3',5'-cyclic GMP: step 1/1. Its activity is regulated as follows. Not inhibited by cAMP. Inhibited by zaprinast. Specifically hydrolyzes the second messenger cGMP, which is a key regulator of many important physiological processes. The chain is cGMP-specific 3',5'-cyclic phosphodiesterase alpha from Plasmodium falciparum (isolate 3D7).